Reading from the N-terminus, the 1714-residue chain is Latrophilin Cirl (1714 aa).

At 1 to 765 (MSSIDISGRY…LFTMFDGNMR (765 aa)) the chain is on the extracellular side. Residues 26–115 (ACEGKKLTIE…KYLEAHYQCI (90 aa)) form the SUEL-type lectin domain. Residue asparagine 143 is glycosylated (N-linked (GlcNAc...) asparagine). Residues 183–302 (PPHTVTHSTP…GSPASGNNSV (120 aa)) form a disordered region. A compositionally biased stretch (low complexity) spans 186-198 (TVTHSTPSSSTVP). Residues 244–262 (PSSKLPSAGNATAPSNTRI) show a composition bias toward polar residues. Asparagine 253 is a glycosylation site (N-linked (GlcNAc...) asparagine). Low complexity-rich tracts occupy residues 272-282 (DDGTLLTTKSS) and 290-301 (ASNGSPASGNNS). N-linked (GlcNAc...) asparagine glycosylation is found at asparagine 299, asparagine 338, asparagine 395, asparagine 652, asparagine 701, and asparagine 728. The tract at residues 373–397 (YDEYDDDPSSTTPAPSGGDCLHNSS) is disordered. The GAIN-B domain occupies 558–752 (RSVVQKVKNI…AILMDVVDEH (195 aa)). Cystine bridges form between cysteine 707–cysteine 734 and cysteine 722–cysteine 736. The segment at 707-752 (CVFWNYIDHAWSANGCSLESTNRTHSVCSCNHLTNFAILMDVVDEH) is GPS. A helical membrane pass occupies residues 766-786 (VFIYISIAICVVFIVIALLTL). Residues 787 to 799 (KLFNGVFVKSART) lie on the Cytoplasmic side of the membrane. The helical transmembrane segment at 800-820 (TIYTSIYVCLLAIELLFLLGI) threads the bilayer. The Extracellular portion of the chain corresponds to 821-826 (EQTETS). Residues 827–847 (IFCGFITVFLHCAILSGAAWF) traverse the membrane as a helical segment. At 848-873 (CYEAFHSYYTLTSDELLVEVDQTPKV) the chain is on the cytoplasmic side. The chain crosses the membrane as a helical span at residues 874-894 (NWYYLLSYGLSVSVVAISVAI). Residues 895–911 (NPSTYTQNDYCVLMEAN) lie on the Extracellular side of the membrane. A helical membrane pass occupies residues 912 to 932 (ILFYATFVAPVLIFFVAAIGY). Residues 933–966 (TFLSWIIMCRKSCTGLKTKEHTRLASVRFDIRCS) lie on the Cytoplasmic side of the membrane. Residues 967 to 987 (FVFLLLLSAVWCSAYFYLRGA) traverse the membrane as a helical segment. The Extracellular portion of the chain corresponds to 988-994 (KTDEDTT). A helical membrane pass occupies residues 995 to 1015 (TIYGYCFICFNTLLGLYIFVF). Topologically, residues 1016–1714 (HCIQNEKIRR…VRCYLEPLAK (699 aa)) are cytoplasmic. A phosphoserine mark is found at serine 1155, serine 1245, and serine 1252. Disordered stretches follow at residues 1229-1253 (PNSQ…LHSR), 1268-1287 (KTKQ…LDPP), 1293-1354 (AFYQ…PPPH), 1447-1536 (GGGS…DERM), and 1551-1694 (FQRQ…QQRH). Residues 1296-1315 (QQQQQMRRQQQQQQQQQQQQ) show a composition bias toward low complexity. Residues serine 1317 and serine 1318 each carry the phosphoserine modification. Low complexity-rich tracts occupy residues 1330–1348 (LHLQ…QQQL) and 1453–1478 (GGSV…QQQR). Composition is skewed to acidic residues over residues 1486–1500 (DDDD…DEAT) and 1510–1523 (CDDD…DLDD). Residues 1524–1536 (DAHKLPPQSDERM) are compositionally biased toward basic and acidic residues. Residues 1565-1580 (GALPPGVAPGAGSAGP) show a composition bias toward low complexity. Polar residues predominate over residues 1644–1659 (QTPAQKRQQLQKLSPQ). Low complexity predominate over residues 1660 to 1675 (STTSSSSHTSHSNLQP). The span at 1679-1693 (PLTHQHPHPPQHQQR) shows a compositional bias: basic residues.

It belongs to the G-protein coupled receptor 2 family. LN-TM7 subfamily. Forms a heterodimer, consisting of a large extracellular region non-covalently linked to a seven-transmembrane moiety. Post-translationally, proteolytically cleaved into 2 subunits, an extracellular subunit and a seven-transmembrane subunit.

Its subcellular location is the cell membrane. The protein is Latrophilin Cirl of Drosophila ananassae (Fruit fly).